We begin with the raw amino-acid sequence, 80 residues long: Cortexin-3 (80 aa).

The chain crosses the membrane as a helical span at residues threonine 28–phenylalanine 48.

It belongs to the cortexin family.

It is found in the membrane. The sequence is that of Cortexin-3 (Ctxn3) from Mus musculus (Mouse).